We begin with the raw amino-acid sequence, 380 residues long: Cytochrome b (380 aa).

Helical transmembrane passes span 33 to 53 (FGSL…FLAM), 77 to 98 (WLIR…FLHV), 113 to 133 (WNMG…GYVL), and 178 to 198 (FFAF…VHLL). 2 residues coordinate heme b: His-83 and His-97. Heme b-binding residues include His-182 and His-196. Residue His-201 participates in a ubiquinone binding. 4 helical membrane-spanning segments follow: residues 226–246 (IKDF…TLFF), 288–308 (LGGV…PLLH), 320–340 (ITQI…WIGG), and 347–367 (FITI…IFMP).

It belongs to the cytochrome b family. The cytochrome bc1 complex contains 11 subunits: 3 respiratory subunits (MT-CYB, CYC1 and UQCRFS1), 2 core proteins (UQCRC1 and UQCRC2) and 6 low-molecular weight proteins (UQCRH/QCR6, UQCRB/QCR7, UQCRQ/QCR8, UQCR10/QCR9, UQCR11/QCR10 and a cleavage product of UQCRFS1). This cytochrome bc1 complex then forms a dimer. The cofactor is heme b.

It is found in the mitochondrion inner membrane. In terms of biological role, component of the ubiquinol-cytochrome c reductase complex (complex III or cytochrome b-c1 complex) that is part of the mitochondrial respiratory chain. The b-c1 complex mediates electron transfer from ubiquinol to cytochrome c. Contributes to the generation of a proton gradient across the mitochondrial membrane that is then used for ATP synthesis. This chain is Cytochrome b (MT-CYB), found in Microtus oregoni (Creeping vole).